Reading from the N-terminus, the 438-residue chain is Coenzyme A disulfide reductase (438 aa).

Glycine 8–glutamate 33 provides a ligand contact to FAD. Substrate contacts are provided by threonine 15, glutamine 19, arginine 22, serine 39, and asparagine 42. Cysteine 43 serves as the catalytic Nucleophile. The active-site Redox-active is cysteine 43. Lysine 71 lines the substrate pocket. Valine 151 to asparagine 166 is a binding site for NADP(+). FAD is bound at residue threonine 267–aspartate 277. Histidine 299 is a substrate binding site. FAD is bound at residue tyrosine 419. Lysine 427 is a binding site for substrate.

This sequence belongs to the class-III pyridine nucleotide-disulfide oxidoreductase family. Homodimer. It depends on FAD as a cofactor.

It catalyses the reaction NADP(+) + 2 CoA = CoA-disulfide + NADPH + H(+). Functionally, catalyzes specifically the NADPH-dependent reduction of coenzyme A disulfide. This chain is Coenzyme A disulfide reductase, found in Staphylococcus aureus (strain COL).